We begin with the raw amino-acid sequence, 368 residues long: MFYWLIELTNTFPSLSVFRGVLNVFRYITFRTGGAVVTGALFVFLFGPWIIDHLRLRQGKGQPIRTDGPQSHIISKKGTPTMGGLMILSGLVVSTVLWANPLNPYVWIVLAVTLGFGFVGFYDDYLKVTKQSHSGFAGRARLLIEAAIALVACYALVRLGRDPSSTGLAIPFFKDLVIKFGWMYVIFGAFVIVGAGNAVNLTDGLDGLAIVPVMIASASFGLIAYLAGNAVFSDYLQIHYVAGTGELAVLCGAVLGAGLGFLWFNAPPASIFMGDTGSLALGGMLGSIAVAVKHEIVLAVIGGLFVLEAVSVIVQVASFKLTGKRIFRMAPIHHHFEQLGWTEPQIVIRFWIISVMLALVGLSTLKLR.

A run of 10 helical transmembrane segments spans residues 34–54, 79–99, 102–122, 140–160, 176–196, 207–227, 247–267, 271–291, 296–316, and 345–365; these read GAVVTGALFVFLFGPWIIDHL, TPTMGGLMILSGLVVSTVLWA, LNPYVWIVLAVTLGFGFVGFY, ARLLIEAAIALVACYALVRLG, LVIKFGWMYVIFGAFVIVGAG, GLAIVPVMIASASFGLIAYLA, LAVLCGAVLGAGLGFLWFNAP, IFMGDTGSLALGGMLGSIAVA, IVLAVIGGLFVLEAVSVIVQV, and QIVIRFWIISVMLALVGLSTL.

This sequence belongs to the glycosyltransferase 4 family. MraY subfamily. The cofactor is Mg(2+).

It localises to the cell inner membrane. It catalyses the reaction UDP-N-acetyl-alpha-D-muramoyl-L-alanyl-gamma-D-glutamyl-meso-2,6-diaminopimeloyl-D-alanyl-D-alanine + di-trans,octa-cis-undecaprenyl phosphate = di-trans,octa-cis-undecaprenyl diphospho-N-acetyl-alpha-D-muramoyl-L-alanyl-D-glutamyl-meso-2,6-diaminopimeloyl-D-alanyl-D-alanine + UMP. It participates in cell wall biogenesis; peptidoglycan biosynthesis. Functionally, catalyzes the initial step of the lipid cycle reactions in the biosynthesis of the cell wall peptidoglycan: transfers peptidoglycan precursor phospho-MurNAc-pentapeptide from UDP-MurNAc-pentapeptide onto the lipid carrier undecaprenyl phosphate, yielding undecaprenyl-pyrophosphoryl-MurNAc-pentapeptide, known as lipid I. The polypeptide is Phospho-N-acetylmuramoyl-pentapeptide-transferase (Bradyrhizobium sp. (strain ORS 278)).